A 409-amino-acid polypeptide reads, in one-letter code: 5-aminolevulinate synthase (409 aa).

The substrate site is built by arginine 21, serine 137, and lysine 156. Pyridoxal 5'-phosphate-binding residues include serine 189, histidine 217, and threonine 245. Lysine 248 is an active-site residue. Lysine 248 is subject to N6-(pyridoxal phosphate)lysine. The pyridoxal 5'-phosphate site is built by threonine 277 and threonine 278. Threonine 365 is a binding site for substrate.

This sequence belongs to the class-II pyridoxal-phosphate-dependent aminotransferase family. In terms of assembly, homodimer. Pyridoxal 5'-phosphate is required as a cofactor.

It carries out the reaction succinyl-CoA + glycine + H(+) = 5-aminolevulinate + CO2 + CoA. Its pathway is porphyrin-containing compound metabolism; protoporphyrin-IX biosynthesis; 5-aminolevulinate from glycine: step 1/1. The sequence is that of 5-aminolevulinate synthase (hemA) from Paracoccus denitrificans (strain Pd 1222).